The primary structure comprises 576 residues: MMLPTKRPAPDHGDDERNEVMVPEPKRRTNLKKNIMGVGGLSFNKIVLNLEPMLRIWVHEAVEAAIRSSIHPSSRPSLNRIEASRGRRLQLRFVDKPPSTIFTGSKVEAENGNPIRIILVDATSQAMVSSGSLSSIKVEIVVLNGEFGTDERQDWTENEFNASVLREREGRRPLVTGDLNITLVDGVGTVDNVIFTDNSSWIRCRKFRLGARIVQRSAGEVTIREATSDAFMVKDHRGELYKKHYPPLLHDEVWRLERIAKDGAFHKRLAYKNVHTVKDFLRLLVTDPIALRNILGGGISNRVWETIIEHALSCVPDDDEWYTYHGTAQRVELLLNSIYNVVKVTFDGQDYLPVENLTFSQKLLVEDAKRQAYKNVWNLTPFDRRAIMGPSMPFTDLLPEPVGTSNLLLQQHDFSGTRPDMPLGLNQSSTSFSYEVENPKPLQGIEPLNPMLRNSSFRMEGIFPYNADNSFSFFADDGFGTNQDNTQAQMLSLTSATPAWAQGSGFIFTPDYETSSISFLSSFPSCNVNDRSIGETREVCPKNRWLKVRAVIQWKSISRGAAKRRRQHWLQHGICT.

The interval 1 to 25 is disordered; it reads MMLPTKRPAPDHGDDERNEVMVPEP. The segment at 1–80 is calmodulin-binding; that stretch reads MMLPTKRPAP…HPSSRPSLNR (80 aa). Over residues 8 to 25 the composition is skewed to basic and acidic residues; the sequence is PAPDHGDDERNEVMVPEP. The DNA-binding stretch occupies residues 150–273; the sequence is DERQDWTENE…AFHKRLAYKN (124 aa).

The protein belongs to the plant ACBP60 protein family. (Microbial infection) Interacts with V.dahliae SCP41. In terms of assembly, interacts with calmodulin (CaM).

The protein localises to the nucleus. Transcription activator that binds DNA in a sequence-specific manner, likely 5'-GAAATTTTGG-3', to promote the expression of target genes. Required for pathogen resistance. This chain is Calmodulin-binding protein 60 B, found in Gossypium hirsutum (Upland cotton).